The sequence spans 849 residues: Disks large homolog 3 (849 aa).

A disordered region spans residues 32 to 101 (DWQVPDPYGP…GKNTPKLNGS (70 aa)). The span at 41-53 (PSGGNGASSGYGG) shows a compositional bias: gly residues. Residues 57-69 (QTLPSQAGATPTP) are compositionally biased toward polar residues. 3 PDZ domains span residues 149 to 235 (EIVL…VRRR), 244 to 330 (EVNL…VAKP), and 404 to 484 (KIIL…AQYR). Serine 157 bears the Phosphoserine mark. The SH3 domain maps to 519–589 (KRSLYVRALF…PSKKRVEKKE (71 aa)). Positions 659–834 (ARPVIILGPM…IYNKIKQIIE (176 aa)) constitute a Guanylate kinase-like domain. Tyrosine 705 carries the post-translational modification Phosphotyrosine.

It belongs to the MAGUK family. Interacts through its PDZ domains with NETO1 and APC. Interacts through its first two PDZ domains with ERBB4. Interacts through its third PDZ domain with NLGN1, and probably with NLGN2 and NLGN3. Interacts through its PDZ domains with GRIN2B and SYNGAP1. Interacts through its guanylate kinase-like domain with DLGAP1, DLGAP2, DLGAP3 and DLGAP4. Interacts with FRMPD4 (via C-terminus). Interacts with LRFN2. Interacts with LRFN1 and LRFN4. Interacts with FLTP. Interacts with DGKI (via PDZ-binding motif).

Its function is as follows. Required for learning most likely through its role in synaptic plasticity following NMDA receptor signaling. The chain is Disks large homolog 3 (Dlg3) from Rattus norvegicus (Rat).